A 244-amino-acid chain; its full sequence is DNA repair protein RecO (244 aa).

This sequence belongs to the RecO family.

In terms of biological role, involved in DNA repair and RecF pathway recombination. The chain is DNA repair protein RecO from Caldicellulosiruptor bescii (strain ATCC BAA-1888 / DSM 6725 / KCTC 15123 / Z-1320) (Anaerocellum thermophilum).